A 948-amino-acid chain; its full sequence is Insulin receptor substrate 1 (948 aa).

The PH domain maps to 8 to 109; the sequence is GMALSGYLKK…WLDKLLVLQR (102 aa). One can recognise an IRS-type PTB domain in the interval 122-236; it reads YDQVWQVVIQ…SAMSAKTESN (115 aa). The disordered stretch occupies residues 247–270; that stretch reads PDLSHEPMRKRSSSANEASKPINV. Phosphoserine occurs at positions 286 and 287. The segment covering 304-329 has biased composition (polar residues); sequence RNGTLSESSNQTYFGSNHGLRSNTIS. The segment at 304–373 is disordered; that stretch reads RNGTLSESSN…SDDNGSFSHY (70 aa). Phosphoserine is present on Ser-342. Phosphotyrosine; by INSR is present on Tyr-410. The YXXM motif 1 signature appears at 410-413; sequence YIPM. Residues 528-559 are disordered; it reads ANRSQSSITKEGTSYSTSSNRQKKSTSAPLLS. Positions 529–556 are enriched in polar residues; it reads NRSQSSITKEGTSYSTSSNRQKKSTSAP. Ser-554 is modified (phosphoserine). A YXXM motif 2 motif is present at residues 640 to 643; sequence YLEM. Residues 703 to 734 form a disordered region; it reads EKKSNSPLNETPCSLKPTDVESNSHDEHSTNN. A compositionally biased stretch (basic and acidic residues) spans 720 to 731; sequence TDVESNSHDEHS. Position 891 is a phosphotyrosine; by INSR (Tyr-891). Residues 907 to 948 are disordered; sequence YLKRGSRESPPVSACPGDGNTYAKIDFDQSDSSSSSSNIFNT. Residues Ser-912 and Ser-915 each carry the phosphoserine modification. Phosphotyrosine; by INSR is present on Tyr-928. Positions 936–948 are enriched in low complexity; it reads SDSSSSSSNIFNT.

Bindings to phosphatidylinositol 3-kinase and SHP2.

Activates phosphatidylinositol 3-kinase when bound to the regulatory p85 subunit. May mediate the control of various cellular processes by insulin-like peptides. When phosphorylated by the insulin receptor binds specifically to various cellular proteins containing SH2 domains. Involved in control of cell proliferation, cell size, and body and organ growth throughout development. Also has a role in a signaling pathway controlling the physiological response required to endure periods of low nutrient conditions. Insulin/insulin-like growth factor (IGF) signaling pathway has a role in regulating aging and is necessary in the ovary for vitellogenic maturation. This is Insulin receptor substrate 1 from Drosophila erecta (Fruit fly).